We begin with the raw amino-acid sequence, 828 residues long: Periplasmic nitrate reductase (828 aa).

The segment at residues 1–31 (MKLSRRSFMKANAVAAAAAAAGLSVPGVARA) is a signal peptide (tat-type signal). The 4Fe-4S Mo/W bis-MGD-type domain maps to 39-95 (IKWDKAPCRFCGTGCGVLVGTQQGRVVACQGDPDAPVNRGLNCIKGYFLPKIMYGKD). 4 residues coordinate [4Fe-4S] cluster: Cys46, Cys49, Cys53, and Cys81. Residues Lys83, Gln150, Asn175, Cys179, 212 to 219 (WGSNMAEM), 243 to 247 (STFQH), 262 to 264 (QSD), Met372, Gln376, Asn482, 508 to 509 (SD), Lys531, Asp558, and 718 to 727 (TGRVLEHWHT) each bind Mo-bis(molybdopterin guanine dinucleotide). Phe794 contributes to the substrate binding site. Mo-bis(molybdopterin guanine dinucleotide) is bound by residues Asn802 and Lys819.

The protein belongs to the prokaryotic molybdopterin-containing oxidoreductase family. NasA/NapA/NarB subfamily. In terms of assembly, component of the periplasmic nitrate reductase NapAB complex composed of NapA and NapB. Requires [4Fe-4S] cluster as cofactor. It depends on Mo-bis(molybdopterin guanine dinucleotide) as a cofactor. Predicted to be exported by the Tat system. The position of the signal peptide cleavage has not been experimentally proven.

The protein resides in the periplasm. The catalysed reaction is 2 Fe(II)-[cytochrome] + nitrate + 2 H(+) = 2 Fe(III)-[cytochrome] + nitrite + H2O. Its function is as follows. Catalytic subunit of the periplasmic nitrate reductase complex NapAB. Receives electrons from NapB and catalyzes the reduction of nitrate to nitrite. This chain is Periplasmic nitrate reductase, found in Salmonella paratyphi A (strain ATCC 9150 / SARB42).